The primary structure comprises 471 residues: MAAGVDEKDKKTIVFLHPDLGIGGAERLVVDAAVGLQNRGHKVVIFTSHCDPRHCFDEARDGTLDVRVRGNSIIPPSLLGRFSILCAILRQLHLILQITLLTSELRTLSPSAFFVDQLSAGLPLLKLLVPTSPIFFYCHFPDLLLVQGRQTWYKRLYRLPFDTWEEWSMGFADSIAVNSSFTKGIVSHTWPSLASKRSLEVVHPCIDVRSTSDSSQNPNDDDKDVLPWTKTGIILSINRFERKKDIALAIKAFASLSPEQRGKAKLIIAGGYDNRVHENVSYHMDLVDLAEGAPYHLKTATAKTVVSALNTSPDVEVLFLLSVPNTLKEILLRSAKLLVYTPSNEHFGIVPLEAMLRGVPVLAANNGGPTETVVEGETGWLRDPNDVGEWAKVMDKVLNGMGEEELKRMGKKGVERVKGRFADTQMAERLEEIIERMPKGDAAQSGMILLVVGAAVAAVAGVISAVYWKLW.

N-linked (GlcNAc...) asparagine glycans are attached at residues Asn-178 and Asn-279. The helical transmembrane segment at 446–466 threads the bilayer; it reads GMILLVVGAAVAAVAGVISAV.

The protein belongs to the glycosyltransferase group 1 family. Glycosyltransferase 4 subfamily.

It localises to the endoplasmic reticulum membrane. The enzyme catalyses a beta-D-Man-(1-&gt;4)-beta-D-GlcNAc-(1-&gt;4)-alpha-D-GlcNAc-diphospho-di-trans,poly-cis-dolichol + GDP-alpha-D-mannose = an alpha-D-Man-(1-&gt;3)-beta-D-Man-(1-&gt;4)-beta-D-GlcNAc-(1-&gt;4)-alpha-D-GlcNAc-diphospho-di-trans,poly-cis-dolichol + GDP + H(+). The catalysed reaction is an alpha-D-Man-(1-&gt;3)-beta-D-Man-(1-&gt;4)-beta-D-GlcNAc-(1-&gt;4)-alpha-D-GlcNAc-diphospho-di-trans,poly-cis-dolichol + GDP-alpha-D-mannose = an alpha-D-Man-(1-&gt;3)-[alpha-D-Man-(1-&gt;6)]-beta-D-Man-(1-&gt;4)-beta-D-GlcNAc-(1-&gt;4)-alpha-D-GlcNAc-diphospho-di-trans,poly-cis-dolichol + GDP + H(+). Its pathway is protein modification; protein glycosylation. Mannosylates Man(2)GlcNAc(2)-dolichol diphosphate and Man(1)GlcNAc(2)-dolichol diphosphate to form Man(3)GlcNAc(2)-dolichol diphosphate. This is Alpha-1,3/1,6-mannosyltransferase alg-2 (alg-2) from Neurospora crassa (strain ATCC 24698 / 74-OR23-1A / CBS 708.71 / DSM 1257 / FGSC 987).